The following is a 393-amino-acid chain: MNISTIRKDFMIVNMGPHHPSMHGVLRLIVTLDGEDVIDCEPILGYLHRGMEKIAENRTIIQYLPYVTRWDYLATMFTEAITVNGPEQLGNIQVPKRASYIRVIMLELSRIASHLLWLGPFMADIGAQTPFFYIFREREFIYDLFEAATGMRMMHNFFRIGGVATDLPYGWVDKCSDFCDYFLTSIAEYQKLITRNPIFLERVEGVGVVDVKEVINWGLSGPMLRASGIQWDLRKVDNYECYEEFHWEVQWQKEGDSLARYLVRIGEMVESIKIIQQALEGLPGGPYENLEIRCFDREKEPEWNEFEYRFISKKSSPSFELPKQELYVRIEAPKGELGIFIIGDQNGFPWRWKIHPPGFINLQILPQLVKRMKLADIMTILGSIDIIMGEVDR.

This sequence belongs to the complex I 49 kDa subunit family. In terms of assembly, NDH is composed of at least 16 different subunits, 5 of which are encoded in the nucleus.

It is found in the plastid. It localises to the chloroplast thylakoid membrane. The catalysed reaction is a plastoquinone + NADH + (n+1) H(+)(in) = a plastoquinol + NAD(+) + n H(+)(out). It carries out the reaction a plastoquinone + NADPH + (n+1) H(+)(in) = a plastoquinol + NADP(+) + n H(+)(out). In terms of biological role, NDH shuttles electrons from NAD(P)H:plastoquinone, via FMN and iron-sulfur (Fe-S) centers, to quinones in the photosynthetic chain and possibly in a chloroplast respiratory chain. The immediate electron acceptor for the enzyme in this species is believed to be plastoquinone. Couples the redox reaction to proton translocation, and thus conserves the redox energy in a proton gradient. The protein is NAD(P)H-quinone oxidoreductase subunit H, chloroplastic of Phaseolus vulgaris (Kidney bean).